Consider the following 506-residue polypeptide: Histidine ammonia-lyase (506 aa).

The segment at residues 143-145 (ASG) is a cross-link (5-imidazolinone (Ala-Gly)). Serine 144 carries the post-translational modification 2,3-didehydroalanine (Ser).

This sequence belongs to the PAL/histidase family. Contains an active site 4-methylidene-imidazol-5-one (MIO), which is formed autocatalytically by cyclization and dehydration of residues Ala-Ser-Gly.

The protein resides in the cytoplasm. It carries out the reaction L-histidine = trans-urocanate + NH4(+). The protein operates within amino-acid degradation; L-histidine degradation into L-glutamate; N-formimidoyl-L-glutamate from L-histidine: step 1/3. This chain is Histidine ammonia-lyase, found in Enterobacter sp. (strain 638).